We begin with the raw amino-acid sequence, 201 residues long: Recombination protein RecR (201 aa).

A C4-type zinc finger spans residues 56–71 (CKICFNVSSDEVCQYC). The 96-residue stretch at 79 to 174 (SMICVVEESK…TVSRLASGLP (96 aa)) folds into the Toprim domain.

Belongs to the RecR family.

Its function is as follows. May play a role in DNA repair. It seems to be involved in an RecBC-independent recombinational process of DNA repair. It may act with RecF and RecO. The polypeptide is Recombination protein RecR (Cutibacterium acnes (strain DSM 16379 / KPA171202) (Propionibacterium acnes)).